Here is a 122-residue protein sequence, read N- to C-terminus: Ribosome-binding factor A (122 aa).

Belongs to the RbfA family. In terms of assembly, monomer. Binds 30S ribosomal subunits, but not 50S ribosomal subunits or 70S ribosomes.

The protein localises to the cytoplasm. In terms of biological role, one of several proteins that assist in the late maturation steps of the functional core of the 30S ribosomal subunit. Associates with free 30S ribosomal subunits (but not with 30S subunits that are part of 70S ribosomes or polysomes). Required for efficient processing of 16S rRNA. May interact with the 5'-terminal helix region of 16S rRNA. This Syntrophomonas wolfei subsp. wolfei (strain DSM 2245B / Goettingen) protein is Ribosome-binding factor A.